Consider the following 145-residue polypeptide: Lipoprotein signal peptidase (145 aa).

2 consecutive transmembrane segments (helical) span residues 57–77 (LFFI…MIKL) and 79–99 (ENSL…GNLI). Residues Asp109 and Asp124 contribute to the active site. A helical membrane pass occupies residues 120–140 (FNVADSFIVVGAIILGYLMIF).

This sequence belongs to the peptidase A8 family.

It is found in the cell membrane. The catalysed reaction is Release of signal peptides from bacterial membrane prolipoproteins. Hydrolyzes -Xaa-Yaa-Zaa-|-(S,diacylglyceryl)Cys-, in which Xaa is hydrophobic (preferably Leu), and Yaa (Ala or Ser) and Zaa (Gly or Ala) have small, neutral side chains.. It functions in the pathway protein modification; lipoprotein biosynthesis (signal peptide cleavage). In terms of biological role, this protein specifically catalyzes the removal of signal peptides from prolipoproteins. The chain is Lipoprotein signal peptidase from Caldanaerobacter subterraneus subsp. tengcongensis (strain DSM 15242 / JCM 11007 / NBRC 100824 / MB4) (Thermoanaerobacter tengcongensis).